Consider the following 54-residue polypeptide: Small ribosomal subunit protein uS14 (54 aa).

4 residues coordinate Zn(2+): Cys-19, Cys-22, Cys-37, and Cys-40.

The protein belongs to the universal ribosomal protein uS14 family. Zinc-binding uS14 subfamily. In terms of assembly, part of the 30S ribosomal subunit. Zn(2+) serves as cofactor.

Functionally, binds 16S rRNA, required for the assembly of 30S particles. The sequence is that of Small ribosomal subunit protein uS14 from Sulfurisphaera tokodaii (strain DSM 16993 / JCM 10545 / NBRC 100140 / 7) (Sulfolobus tokodaii).